A 54-amino-acid polypeptide reads, in one-letter code: UPF0391 membrane protein pRL90066 (54 aa).

The next 2 membrane-spanning stretches (helical) occupy residues 5-25 (ALVF…GIAG) and 28-48 (ASIA…SLVM).

This sequence belongs to the UPF0391 family.

The protein localises to the cell membrane. This Rhizobium johnstonii (strain DSM 114642 / LMG 32736 / 3841) (Rhizobium leguminosarum bv. viciae) protein is UPF0391 membrane protein pRL90066.